We begin with the raw amino-acid sequence, 748 residues long: Disintegrin and metalloproteinase domain-containing protein 10 (748 aa).

An N-terminal signal peptide occupies residues 1–19 (MVLLRVLILLLSWAAGMGG). Residues 20–213 (QYGNPLNKYI…NGPELLRKKR (194 aa)) constitute a propeptide that is removed on maturation. At 20–672 (QYGNPLNKYI…SPELYENIAE (653 aa)) the chain is on the extracellular side. Residues 171–178 (GGCADHSV) carry the Cysteine switch motif. Cysteine 173 is a Zn(2+) binding site. The Peptidase M12B domain maps to 220 to 456 (NTCQLYIQTD…KRNNCFVESG (237 aa)). 17 cysteine pairs are disulfide-bonded: cysteine 222/cysteine 313, cysteine 344/cysteine 451, cysteine 399/cysteine 435, cysteine 460/cysteine 495, cysteine 471/cysteine 484, cysteine 473/cysteine 479, cysteine 483/cysteine 515, cysteine 503/cysteine 511, cysteine 510/cysteine 536, cysteine 524/cysteine 543, cysteine 530/cysteine 562, cysteine 555/cysteine 567, cysteine 572/cysteine 598, cysteine 580/cysteine 607, cysteine 582/cysteine 597, cysteine 594/cysteine 639, and cysteine 632/cysteine 645. Asparagine 267 and asparagine 278 each carry an N-linked (GlcNAc...) asparagine glycan. Position 383 (histidine 383) interacts with Zn(2+). Glutamate 384 is a catalytic residue. Zn(2+) is bound by residues histidine 387 and histidine 393. Residue asparagine 439 is glycosylated (N-linked (GlcNAc...) asparagine). Residues 457-551 (QPICGNGMVE…LCPASDPKPN (95 aa)) enclose the Disintegrin domain. Asparagine 551 carries N-linked (GlcNAc...) asparagine glycosylation. The chain crosses the membrane as a helical span at residues 673–693 (WIVAHWWAVLLMGIALIMLMA). Residues 694 to 748 (GFIKICSVHTPSSNPKLPPPKPLPGTLKRRRPPQPIQQPQRQRPRESYQMGHMRR) are Cytoplasmic-facing. The disordered stretch occupies residues 704 to 748 (PSSNPKLPPPKPLPGTLKRRRPPQPIQQPQRQRPRESYQMGHMRR). The SH3-binding motif lies at 708 to 715 (PKLPPPKP). Threonine 719 is modified (phosphothreonine; by FAM20C). The SH3-binding signature appears at 722–728 (RRRPPQP). The interval 734-748 (RQRPRESYQMGHMRR) is interaction with AP2A1, AP2A2 and AP2M1.

Forms a ternary EFNA5-EPHA3-ADAM10 complex mediating EFNA5 extracellular domain shedding by ADAM10 which regulates the EFNA5-EPHA3 complex internalization and function, the cleavage occurs in trans, with ADAM10 and its substrate being on the membranes of opposing cells. Interacts with the clathrin adapter AP2 complex subunits AP2A1, AP2A2, AP2B1, and AP2M1; this interaction facilitates ADAM10 endocytosis from the plasma membrane during long-term potentiation in hippocampal neurons. Forms a ternary complex composed of ADAM10, EPHA4 and CADH1; within the complex, ADAM10 cleaves CADH1 which disrupts adherens junctions. Interacts with EPHA2. Interacts with NGF in a divalent cation-dependent manner. Interacts with TSPAN14; the interaction promotes ADAM10 maturation and cell surface expression. Interacts with TSPAN5, TSPAN10, TSPAN14, TSPAN15, TSPAN17 and TSPAN33; these interactions regulate ADAM10 substrate specificity, endocytosis and turnover. Interacts (via extracellular domain) with TSPAN33 (via extracellular domain) and (via cytoplasmic domain) with AFDN; interaction with TSPAN33 allows the docking of ADAM10 to zonula adherens through a PDZ11-dependent interaction between TSPAN33 and PLEKHA7 while interaction with AFDN locks ADAM10 at zonula adherens. Interacts with DLG1; this interaction recruits ADAM10 to the cell membrane during long-term depression in hippocampal neurons. Interacts (via extracellular domain) with BACE1 (via extracellular domain). Interacts with FAM171A1. In terms of assembly, (Microbial infection) Interacts with S.aureus hly; this interaction is necessary for toxin pore formation, disruption of focal adhesions and S.aureus hly-mediated cytotoxicity. Requires Zn(2+) as cofactor. In terms of processing, the precursor is cleaved by furin and PCSK7. As to expression, expressed in the brain (at protein level). Expressed in spleen, lymph node, thymus, peripheral blood leukocyte, bone marrow, cartilage, chondrocytes and fetal liver.

Its subcellular location is the cell membrane. It is found in the golgi apparatus membrane. The protein resides in the cytoplasmic vesicle. It localises to the clathrin-coated vesicle. The protein localises to the cell projection. Its subcellular location is the axon. It is found in the dendrite. The protein resides in the cell junction. It localises to the adherens junction. The protein localises to the cytoplasm. It catalyses the reaction Endopeptidase of broad specificity.. Catalytically inactive when the propeptide is intact and associated with the mature enzyme. The disintegrin and cysteine-rich regions modulate access of substrates to exerts an inhibitory effect on the cleavage of ADAM10 substrates. In terms of biological role, transmembrane metalloprotease which mediates the ectodomain shedding of a myriad of transmembrane proteins, including adhesion proteins, growth factor precursors and cytokines being essential for development and tissue homeostasis. Associates with six members of the tetraspanin superfamily TspanC8 which regulate its exit from the endoplasmic reticulum and its substrate selectivity. Cleaves the membrane-bound precursor of TNF-alpha at '76-Ala-|-Val-77' to its mature soluble form. Responsible for the proteolytical release of soluble JAM3 from endothelial cells surface. Responsible for the proteolytic release of several other cell-surface proteins, including heparin-binding epidermal growth-like factor, ephrin-A2, CD44, CDH2 and for constitutive and regulated alpha-secretase cleavage of amyloid precursor protein (APP). Contributes to the normal cleavage of the cellular prion protein. Involved in the cleavage of the adhesion molecule L1 at the cell surface and in released membrane vesicles, suggesting a vesicle-based protease activity. Also controls the proteolytic processing of Notch and mediates lateral inhibition during neurogenesis. Required for the development of type 1 transitional B cells into marginal zone B cells, probably by cleaving Notch. Responsible for the FasL ectodomain shedding and for the generation of the remnant ADAM10-processed FasL (FasL APL) transmembrane form. Also cleaves the ectodomain of the integral membrane proteins CORIN and ITM2B. Mediates the proteolytic cleavage of LAG3, leading to release the secreted form of LAG3. Mediates the proteolytic cleavage of IL6R and IL11RA, leading to the release of secreted forms of IL6R and IL11RA. Enhances the cleavage of CHL1 by BACE1. Cleaves NRCAM. Cleaves TREM2, resulting in shedding of the TREM2 ectodomain. Involved in the development and maturation of glomerular and coronary vasculature. During development of the cochlear organ of Corti, promotes pillar cell separation by forming a ternary complex with CADH1 and EPHA4 and cleaving CADH1 at adherens junctions. May regulate the EFNA5-EPHA3 signaling. Regulates leukocyte transmigration as a sheddase for the adherens junction protein VE-cadherin/CDH5 in endothelial cells. Functionally, (Microbial infection) Promotes the cytotoxic activity of S.aureus hly by binding to the toxin at zonula adherens and promoting formation of toxin pores. This Homo sapiens (Human) protein is Disintegrin and metalloproteinase domain-containing protein 10.